We begin with the raw amino-acid sequence, 289 residues long: Serine/threonine-protein phosphatase Pgam5, mitochondrial (289 aa).

This sequence belongs to the phosphoglycerate mutase family. BPG-dependent PGAM subfamily. In terms of assembly, interacts with Pk92B/ASK1.

The protein resides in the mitochondrion outer membrane. It carries out the reaction O-phospho-L-seryl-[protein] + H2O = L-seryl-[protein] + phosphate. The enzyme catalyses O-phospho-L-threonyl-[protein] + H2O = L-threonyl-[protein] + phosphate. In terms of biological role, displays phosphatase activity for serine/threonine residues, and dephosphorylates and activates Pk92B kinase. Has apparently no phosphoglycerate mutase activity. The chain is Serine/threonine-protein phosphatase Pgam5, mitochondrial from Drosophila grimshawi (Hawaiian fruit fly).